A 48-amino-acid chain; its full sequence is Sperm protamine R3 isoform 2 (48 aa).

Basic residues predominate over residues 1-29 (ARRRHSMKKKRKSVRRRKTRKNQRKRKNS). The segment at 1–48 (ARRRHSMKKKRKSVRRRKTRKNQRKRKNSLGRSFKAHGFLKQPPRFRP) is disordered.

As to expression, testis.

It localises to the nucleus. Its subcellular location is the chromosome. Its function is as follows. Protamines substitute for histones in the chromatin of sperm during the haploid phase of spermatogenesis. They compact sperm DNA into a highly condensed, stable and inactive complex. The sequence is that of Sperm protamine R3 isoform 2 from Hydrolagus colliei (Spotted ratfish).